The sequence spans 359 residues: Phospho-N-acetylmuramoyl-pentapeptide-transferase (359 aa).

10 consecutive transmembrane segments (helical) span residues 3–23 (QILI…PALI), 55–75 (VAII…GLAF), 80–100 (ISAS…VGFL), 117–137 (TAKT…ALGF), 156–176 (IATV…VVSA), 187–207 (LDGL…LITF), 231–251 (LAIV…WNAA), 255–275 (IFMG…ISVT), 280–300 (ILAV…VLQI), and 334–354 (FWLL…GEWL).

Belongs to the glycosyltransferase 4 family. MraY subfamily. Requires Mg(2+) as cofactor.

The protein resides in the cell membrane. The catalysed reaction is UDP-N-acetyl-alpha-D-muramoyl-L-alanyl-gamma-D-glutamyl-meso-2,6-diaminopimeloyl-D-alanyl-D-alanine + di-trans,octa-cis-undecaprenyl phosphate = di-trans,octa-cis-undecaprenyl diphospho-N-acetyl-alpha-D-muramoyl-L-alanyl-D-glutamyl-meso-2,6-diaminopimeloyl-D-alanyl-D-alanine + UMP. The protein operates within cell wall biogenesis; peptidoglycan biosynthesis. Its function is as follows. Catalyzes the initial step of the lipid cycle reactions in the biosynthesis of the cell wall peptidoglycan: transfers peptidoglycan precursor phospho-MurNAc-pentapeptide from UDP-MurNAc-pentapeptide onto the lipid carrier undecaprenyl phosphate, yielding undecaprenyl-pyrophosphoryl-MurNAc-pentapeptide, known as lipid I. This is Phospho-N-acetylmuramoyl-pentapeptide-transferase from Mycobacterium avium (strain 104).